The primary structure comprises 138 residues: Venom allergen 2 (138 aa).

A signal peptide spans 1–19 (MKSFVLATCLLGFAQIIYA).

Belongs to the ant venom allergen 2/4 family. As to quaternary structure, homodimer; disulfide-linked. In terms of tissue distribution, expressed by the venom gland.

The protein resides in the secreted. The chain is Venom allergen 2 from Solenopsis saevissima (Fire ant).